The chain runs to 246 residues: Exosome complex component Rrp41 (246 aa).

This sequence belongs to the RNase PH family. Rrp41 subfamily. As to quaternary structure, component of the archaeal exosome complex. Forms a hexameric ring-like arrangement composed of 3 Rrp41-Rrp42 heterodimers. The hexameric ring associates with a trimer of Rrp4 and/or Csl4 subunits.

The protein resides in the cytoplasm. Functionally, catalytic component of the exosome, which is a complex involved in RNA degradation. Has 3'-&gt;5' exoribonuclease activity. Can also synthesize heteromeric RNA-tails. The protein is Exosome complex component Rrp41 of Aeropyrum pernix (strain ATCC 700893 / DSM 11879 / JCM 9820 / NBRC 100138 / K1).